A 337-amino-acid polypeptide reads, in one-letter code: Probable dual-specificity RNA methyltransferase RlmN (337 aa).

Catalysis depends on glutamate 88, which acts as the Proton acceptor. Residues 94-324 (SEKRLTVCVS…VRYSRGLATD (231 aa)) enclose the Radical SAM core domain. The cysteines at positions 101 and 327 are disulfide-linked. Positions 108, 112, and 115 each coordinate [4Fe-4S] cluster. Residues 155 to 156 (GE), serine 185, 208 to 210 (SLH), and asparagine 284 contribute to the S-adenosyl-L-methionine site. The S-methylcysteine intermediate role is filled by cysteine 327.

The protein belongs to the radical SAM superfamily. RlmN family. [4Fe-4S] cluster is required as a cofactor.

The protein resides in the cytoplasm. The catalysed reaction is adenosine(2503) in 23S rRNA + 2 reduced [2Fe-2S]-[ferredoxin] + 2 S-adenosyl-L-methionine = 2-methyladenosine(2503) in 23S rRNA + 5'-deoxyadenosine + L-methionine + 2 oxidized [2Fe-2S]-[ferredoxin] + S-adenosyl-L-homocysteine. It carries out the reaction adenosine(37) in tRNA + 2 reduced [2Fe-2S]-[ferredoxin] + 2 S-adenosyl-L-methionine = 2-methyladenosine(37) in tRNA + 5'-deoxyadenosine + L-methionine + 2 oxidized [2Fe-2S]-[ferredoxin] + S-adenosyl-L-homocysteine. In terms of biological role, specifically methylates position 2 of adenine 2503 in 23S rRNA and position 2 of adenine 37 in tRNAs. In Microcystis aeruginosa (strain NIES-843 / IAM M-2473), this protein is Probable dual-specificity RNA methyltransferase RlmN.